A 244-amino-acid chain; its full sequence is uncharacterized protein (244 aa).

4 consecutive transmembrane segments (helical) span residues 20-42 (TITA…VVLI), 49-67 (FVYI…ATKV), 82-101 (TPSI…ASVF), and 108-125 (AFLV…ATPI).

It localises to the cell membrane. This is an uncharacterized protein from Archaeoglobus fulgidus (strain ATCC 49558 / DSM 4304 / JCM 9628 / NBRC 100126 / VC-16).